The primary structure comprises 240 residues: UDP-2,3-diacylglucosamine hydrolase (240 aa).

Asp-7, His-9, Asp-40, Asn-78, and His-113 together coordinate Mn(2+). A substrate-binding site is contributed by 78 to 79 (NR). Asp-121, Ser-159, Thr-163, Lys-166, and His-194 together coordinate substrate. Residues His-194 and His-196 each contribute to the Mn(2+) site.

Belongs to the LpxH family. Requires Mn(2+) as cofactor.

It localises to the cell inner membrane. It carries out the reaction UDP-2-N,3-O-bis[(3R)-3-hydroxytetradecanoyl]-alpha-D-glucosamine + H2O = 2-N,3-O-bis[(3R)-3-hydroxytetradecanoyl]-alpha-D-glucosaminyl 1-phosphate + UMP + 2 H(+). It functions in the pathway glycolipid biosynthesis; lipid IV(A) biosynthesis; lipid IV(A) from (3R)-3-hydroxytetradecanoyl-[acyl-carrier-protein] and UDP-N-acetyl-alpha-D-glucosamine: step 4/6. Functionally, hydrolyzes the pyrophosphate bond of UDP-2,3-diacylglucosamine to yield 2,3-diacylglucosamine 1-phosphate (lipid X) and UMP by catalyzing the attack of water at the alpha-P atom. Involved in the biosynthesis of lipid A, a phosphorylated glycolipid that anchors the lipopolysaccharide to the outer membrane of the cell. The chain is UDP-2,3-diacylglucosamine hydrolase from Stutzerimonas stutzeri (strain A1501) (Pseudomonas stutzeri).